The following is a 464-amino-acid chain: Argininosuccinate lyase (464 aa).

The protein belongs to the lyase 1 family. Argininosuccinate lyase subfamily.

It is found in the cytoplasm. It carries out the reaction 2-(N(omega)-L-arginino)succinate = fumarate + L-arginine. The protein operates within amino-acid biosynthesis; L-arginine biosynthesis; L-arginine from L-ornithine and carbamoyl phosphate: step 3/3. The chain is Argininosuccinate lyase from Chlorobium phaeobacteroides (strain DSM 266 / SMG 266 / 2430).